Reading from the N-terminus, the 119-residue chain is V-type proton ATPase subunit F (119 aa).

This sequence belongs to the V-ATPase F subunit family. As to quaternary structure, V-ATPase is a heteromultimeric enzyme made up of two complexes: the ATP-hydrolytic V1 complex and the proton translocation V0 complex. The V1 complex consists of three catalytic AB heterodimers that form a heterohexamer, three peripheral stalks each consisting of EG heterodimers, one central rotor including subunits D and F, and the regulatory subunits C and H. The proton translocation complex V0 consists of the proton transport subunit a, a ring of proteolipid subunits c9c'', rotary subunit d, subunits e and f, and the accessory subunits ATP6AP1/Ac45 and ATP6AP2/PRR.

The protein resides in the cytoplasmic vesicle. The protein localises to the secretory vesicle. Its subcellular location is the synaptic vesicle membrane. It is found in the clathrin-coated vesicle membrane. Functionally, subunit of the V1 complex of vacuolar(H+)-ATPase (V-ATPase), a multisubunit enzyme composed of a peripheral complex (V1) that hydrolyzes ATP and a membrane integral complex (V0) that translocates protons. V-ATPase is responsible for acidifying and maintaining the pH of intracellular compartments and in some cell types, is targeted to the plasma membrane, where it is responsible for acidifying the extracellular environment. The sequence is that of V-type proton ATPase subunit F (ATP6V1F) from Homo sapiens (Human).